A 94-amino-acid polypeptide reads, in one-letter code: Cell division topological specificity factor (94 aa).

This sequence belongs to the MinE family.

Prevents the cell division inhibition by proteins MinC and MinD at internal division sites while permitting inhibition at polar sites. This ensures cell division at the proper site by restricting the formation of a division septum at the midpoint of the long axis of the cell. In Synechococcus sp. (strain CC9311), this protein is Cell division topological specificity factor.